Consider the following 674-residue polypeptide: DNA-directed RNA polymerase subunit beta' (674 aa).

The Zn(2+) site is built by cysteine 69, cysteine 71, cysteine 87, and cysteine 90. Residues aspartate 494, aspartate 496, and aspartate 498 each coordinate Mg(2+).

It belongs to the RNA polymerase beta' chain family. RpoC1 subfamily. In terms of assembly, in plastids the minimal PEP RNA polymerase catalytic core is composed of four subunits: alpha, beta, beta', and beta''. When a (nuclear-encoded) sigma factor is associated with the core the holoenzyme is formed, which can initiate transcription. It depends on Mg(2+) as a cofactor. The cofactor is Zn(2+).

Its subcellular location is the plastid. The protein localises to the chloroplast. The enzyme catalyses RNA(n) + a ribonucleoside 5'-triphosphate = RNA(n+1) + diphosphate. DNA-dependent RNA polymerase catalyzes the transcription of DNA into RNA using the four ribonucleoside triphosphates as substrates. The chain is DNA-directed RNA polymerase subunit beta' from Psilotum nudum (Whisk fern).